The chain runs to 171 residues: 3-hydroxyanthranilate 3,4-dioxygenase (171 aa).

Arg-45 provides a ligand contact to O2. His-49, Glu-55, and His-93 together coordinate Fe cation. Residue Glu-55 coordinates substrate. Positions 97 and 107 each coordinate substrate. Cys-122, Cys-125, Cys-159, and Cys-162 together coordinate a divalent metal cation.

The protein belongs to the 3-HAO family. Fe(2+) is required as a cofactor.

The protein localises to the cytoplasm. The catalysed reaction is 3-hydroxyanthranilate + O2 = (2Z,4Z)-2-amino-3-carboxymuconate 6-semialdehyde. The protein operates within cofactor biosynthesis; NAD(+) biosynthesis; quinolinate from L-kynurenine: step 3/3. Functionally, catalyzes the oxidative ring opening of 3-hydroxyanthranilate to 2-amino-3-carboxymuconate semialdehyde, which spontaneously cyclizes to quinolinate. This Candida albicans (strain SC5314 / ATCC MYA-2876) (Yeast) protein is 3-hydroxyanthranilate 3,4-dioxygenase.